The primary structure comprises 157 residues: SsrA-binding protein (157 aa).

It belongs to the SmpB family.

It localises to the cytoplasm. Its function is as follows. Required for rescue of stalled ribosomes mediated by trans-translation. Binds to transfer-messenger RNA (tmRNA), required for stable association of tmRNA with ribosomes. tmRNA and SmpB together mimic tRNA shape, replacing the anticodon stem-loop with SmpB. tmRNA is encoded by the ssrA gene; the 2 termini fold to resemble tRNA(Ala) and it encodes a 'tag peptide', a short internal open reading frame. During trans-translation Ala-aminoacylated tmRNA acts like a tRNA, entering the A-site of stalled ribosomes, displacing the stalled mRNA. The ribosome then switches to translate the ORF on the tmRNA; the nascent peptide is terminated with the 'tag peptide' encoded by the tmRNA and targeted for degradation. The ribosome is freed to recommence translation, which seems to be the essential function of trans-translation. The chain is SsrA-binding protein from Limosilactobacillus reuteri (strain DSM 20016) (Lactobacillus reuteri).